Consider the following 248-residue polypeptide: Pyridoxine 5'-phosphate synthase (248 aa).

A 3-amino-2-oxopropyl phosphate-binding site is contributed by asparagine 12. Aspartate 14–histidine 15 contributes to the 1-deoxy-D-xylulose 5-phosphate binding site. Residue arginine 23 participates in 3-amino-2-oxopropyl phosphate binding. The Proton acceptor role is filled by histidine 48. Residues arginine 50 and histidine 55 each contribute to the 1-deoxy-D-xylulose 5-phosphate site. The active-site Proton acceptor is the glutamate 75. Threonine 105 is a binding site for 1-deoxy-D-xylulose 5-phosphate. Histidine 196 serves as the catalytic Proton donor. 3-amino-2-oxopropyl phosphate is bound by residues glycine 197 and glycine 218 to histidine 219.

The protein belongs to the PNP synthase family. As to quaternary structure, homooctamer; tetramer of dimers.

It localises to the cytoplasm. The catalysed reaction is 3-amino-2-oxopropyl phosphate + 1-deoxy-D-xylulose 5-phosphate = pyridoxine 5'-phosphate + phosphate + 2 H2O + H(+). The protein operates within cofactor biosynthesis; pyridoxine 5'-phosphate biosynthesis; pyridoxine 5'-phosphate from D-erythrose 4-phosphate: step 5/5. In terms of biological role, catalyzes the complicated ring closure reaction between the two acyclic compounds 1-deoxy-D-xylulose-5-phosphate (DXP) and 3-amino-2-oxopropyl phosphate (1-amino-acetone-3-phosphate or AAP) to form pyridoxine 5'-phosphate (PNP) and inorganic phosphate. The polypeptide is Pyridoxine 5'-phosphate synthase (Pseudomonas paraeruginosa (strain DSM 24068 / PA7) (Pseudomonas aeruginosa (strain PA7))).